Consider the following 642-residue polypeptide: Wall-associated receptor kinase-like 6 (642 aa).

A signal peptide spans methionine 1 to alanine 28. Residues alanine 29–serine 357 are Extracellular-facing. N-linked (GlcNAc...) asparagine glycans are attached at residues asparagine 37, asparagine 72, asparagine 95, asparagine 137, asparagine 216, asparagine 240, and asparagine 276. Positions cysteine 289–cysteine 346 are atypical EGF-like. Cystine bridges form between cysteine 291–cysteine 304, cysteine 326–cysteine 337, and cysteine 332–cysteine 346. A helical transmembrane segment spans residues valine 358–leucine 378. Topologically, residues tyrosine 379 to asparagine 642 are cytoplasmic. The 211-residue stretch at phenylalanine 432–asparagine 642 folds into the Protein kinase domain. ATP contacts are provided by residues leucine 438–valine 446 and lysine 460. Tyrosine 505 carries the phosphotyrosine modification. The active-site Proton acceptor is the aspartate 559. Phosphothreonine is present on residues threonine 593 and threonine 598. Tyrosine 606 is subject to Phosphotyrosine.

It belongs to the protein kinase superfamily. Ser/Thr protein kinase family. As to expression, slightly expressed in the whole plant.

It is found in the membrane. The enzyme catalyses L-seryl-[protein] + ATP = O-phospho-L-seryl-[protein] + ADP + H(+). The catalysed reaction is L-threonyl-[protein] + ATP = O-phospho-L-threonyl-[protein] + ADP + H(+). In terms of biological role, serine/threonine-protein kinase that may function as a signaling receptor of extracellular matrix component. The protein is Wall-associated receptor kinase-like 6 (WAKL6) of Arabidopsis thaliana (Mouse-ear cress).